The following is a 332-amino-acid chain: Nuclear migration protein nudC (332 aa).

Residues 122-161 (RQQLLDSAGGEPSASNRDGISKPIEKVDDESDKSELGKLM) form a disordered region. In terms of domain architecture, CS spans 168 to 259 (CTLENYTWTQ…NKMNWWSRLV (92 aa)).

Belongs to the nudC family. Interacts with PCID2.

It is found in the cytoplasm. Its function is as follows. Chaperone protein with functions in nuclear localization and cytoplasmic mRNA trafficking. In postmitotic neurons, acts with nudE downstream of dar1 to ensure correct positioning of the nuclei in primary dendrites and as a consequence, is required for determining multipolar neuron morphology. Stabilizes PCID2 in the cytoplasm and thereby is required for promoting cytoplasmic mRNA trafficking. This is Nuclear migration protein nudC from Drosophila melanogaster (Fruit fly).